A 239-amino-acid chain; its full sequence is tRNA (guanine-N(7)-)-methyltransferase (239 aa).

Positions 69, 94, 121, and 144 each coordinate S-adenosyl-L-methionine. Aspartate 144 is an active-site residue. Substrate is bound by residues lysine 148, aspartate 180, and 217-220; that span reads TKFE.

This sequence belongs to the class I-like SAM-binding methyltransferase superfamily. TrmB family.

It catalyses the reaction guanosine(46) in tRNA + S-adenosyl-L-methionine = N(7)-methylguanosine(46) in tRNA + S-adenosyl-L-homocysteine. It participates in tRNA modification; N(7)-methylguanine-tRNA biosynthesis. In terms of biological role, catalyzes the formation of N(7)-methylguanine at position 46 (m7G46) in tRNA. This Pseudoalteromonas atlantica (strain T6c / ATCC BAA-1087) protein is tRNA (guanine-N(7)-)-methyltransferase.